The following is a 179-amino-acid chain: Large ribosomal subunit protein uL5 (179 aa).

This sequence belongs to the universal ribosomal protein uL5 family. In terms of assembly, part of the 50S ribosomal subunit; part of the 5S rRNA/L5/L18/L25 subcomplex. Contacts the 5S rRNA and the P site tRNA. Forms a bridge to the 30S subunit in the 70S ribosome.

This is one of the proteins that bind and probably mediate the attachment of the 5S RNA into the large ribosomal subunit, where it forms part of the central protuberance. In the 70S ribosome it contacts protein S13 of the 30S subunit (bridge B1b), connecting the 2 subunits; this bridge is implicated in subunit movement. Contacts the P site tRNA; the 5S rRNA and some of its associated proteins might help stabilize positioning of ribosome-bound tRNAs. This chain is Large ribosomal subunit protein uL5, found in Agathobacter rectalis (strain ATCC 33656 / DSM 3377 / JCM 17463 / KCTC 5835 / VPI 0990) (Eubacterium rectale).